We begin with the raw amino-acid sequence, 446 residues long: MTGRGGAKKSRAAGPAPPTTTLVLDNGADTIKAGFVSDDKSDGKPRIIPNCLARDRHRKIYVGSELEKCKDFSELAFRRPVEKGFIVNWEAQKEIWDREFFDDKAAQKCDPSDTRLILTEQPNSLPSLQTHCDQIVFEEYGFASYYRGLGPVFNAYRDIQSIFRTPQSTIDSPAQVILLIDSGYSHTTVTPILQGRPLHPAIRRLDVGGKLMTNYLTRLLSVRHFDMRNEPYIVNEMKEAVCYTSLDFKGDLEKTWKGTRGEKREDYLSGAGIAKDYVLPDSHTRFHGVVRDYEPGVSARARKGIVSTEDVLTLRNERFVVPELLFNPSDIGIRQPGIADLVKQSLLAVPIGLWPGLLANIVVVGGNSLSEGFCQRLQTEILKRFPDECRVRVARPEDPIISTWLGAANFAKHEHASKLEVTKQEYEEHGAAWVARKFAAGLGLDP.

The segment covering 1–11 (MTGRGGAKKSR) has biased composition (basic residues). A disordered region spans residues 1–24 (MTGRGGAKKSRAAGPAPPTTTLVL).

The protein belongs to the actin family. ARP6 subfamily. Component of the SWR1 chromatin remodeling complex.

It is found in the cytoplasm. The protein localises to the cytoskeleton. Its subcellular location is the nucleus. Its function is as follows. Component of the SWR1 complex which mediates the ATP-dependent exchange of histone H2A for the H2A variant H2A.Z leading to transcriptional regulation of selected genes by chromatin remodeling. Involved in chromosome stability. The polypeptide is Actin-related protein 6 (arp-6) (Neurospora crassa (strain ATCC 24698 / 74-OR23-1A / CBS 708.71 / DSM 1257 / FGSC 987)).